We begin with the raw amino-acid sequence, 187 residues long: MRQGLLVLALVLVLVLVLAAGSQVQEWYPRESHALNWNKFSGFWYILATATDAQGFLPARDKRKLGASVVKVNKVGQLRVLLAFRRGQGCGRAQPRHPGTSGHLWASLSVKGVKAFHVLSTDYSYGLVYLRLGRATQNYKNLLLFHRQNVSSFQSLKEFMDACDILGLSKAAVILPKDASRTHTILP.

An N-terminal signal peptide occupies residues 1-19; that stretch reads MRQGLLVLALVLVLVLVLA. Cysteine 90 and cysteine 163 are oxidised to a cystine. The N-linked (GlcNAc...) asparagine glycan is linked to asparagine 149. Lysine 170 is subject to N6-acetyllysine.

This sequence belongs to the calycin superfamily. Lipocalin family.

The protein resides in the secreted. Functionally, may play a role in male fertility. May act as a retinoid carrier protein within the epididymis. This chain is Epididymal-specific lipocalin-10 (LCN10), found in Homo sapiens (Human).